A 411-amino-acid chain; its full sequence is tRNA (uracil(54)-C(5))-methyltransferase (411 aa).

Residues cysteine 62, cysteine 68, cysteine 71, and cysteine 138 each coordinate [4Fe-4S] cluster. Residues glutamine 254, tyrosine 280, threonine 285, 301–302 (DS), aspartate 328, and aspartate 342 contribute to the S-adenosyl-L-methionine site. The Nucleophile role is filled by cysteine 369. The active-site Proton acceptor is the glutamate 402.

The protein belongs to the class I-like SAM-binding methyltransferase superfamily. RNA M5U methyltransferase family.

It carries out the reaction uridine(54) in tRNA + S-adenosyl-L-methionine = 5-methyluridine(54) in tRNA + S-adenosyl-L-homocysteine + H(+). Its function is as follows. Catalyzes the formation of 5-methyl-uridine at position 54 (m5U54) in tRNA. The polypeptide is tRNA (uracil(54)-C(5))-methyltransferase (Pyrococcus furiosus (strain ATCC 43587 / DSM 3638 / JCM 8422 / Vc1)).